The chain runs to 240 residues: Small ribosomal subunit protein uS3 (240 aa).

The KH type-2 domain occupies 21–92 (LNEFFTRELA…TIVLYAERVQ (72 aa)). Phosphothreonine is present on residues Thr44 and Thr70. Ser97 is modified (phosphoserine). Residue Lys106 forms a Glycyl lysine isopeptide (Lys-Gly) (interchain with G-Cter in ubiquitin) linkage. Position 129 is a phosphoserine (Ser129). Residues Lys132 and Lys141 each participate in a glycyl lysine isopeptide (Lys-Gly) (interchain with G-Cter in ubiquitin) cross-link. Arg146 carries the omega-N-methylarginine; by SFM1 modification. Glycyl lysine isopeptide (Lys-Gly) (interchain with G-Cter in ubiquitin) cross-links involve residues Lys151, Lys200, and Lys212. Residues 212 to 240 (KEEEPILAPSVKDYRPAEETEAQAEPVEA) are disordered. A Phosphoserine modification is found at Ser221. Residues 230 to 240 (ETEAQAEPVEA) show a composition bias toward acidic residues. Position 231 is a phosphothreonine (Thr231).

The protein belongs to the universal ribosomal protein uS3 family. Component of the small ribosomal subunit (SSU). Mature yeast ribosomes consist of a small (40S) and a large (60S) subunit. The 40S small subunit contains 1 molecule of ribosomal RNA (18S rRNA) and 33 different proteins (encoded by 57 genes). The large 60S subunit contains 3 rRNA molecules (25S, 5.8S and 5S rRNA) and 46 different proteins (encoded by 81 genes). In terms of processing, ubiquitinated at Lys-212 in response to stalled ribosomes. Ubiquitination leads to activation of the No-Go Decay (NGD) pathway and degradation of non-functional 18S rRNA: first monoubiquitinated at Lys-212 by MAG2, followed by formation of 'Lys-63'-linked polyubiquitin chains on monoubiquitin by HEL2 and RSP5.

It is found in the cytoplasm. Its function is as follows. Component of the ribosome, a large ribonucleoprotein complex responsible for the synthesis of proteins in the cell. The small ribosomal subunit (SSU) binds messenger RNAs (mRNAs) and translates the encoded message by selecting cognate aminoacyl-transfer RNA (tRNA) molecules. The large subunit (LSU) contains the ribosomal catalytic site termed the peptidyl transferase center (PTC), which catalyzes the formation of peptide bonds, thereby polymerizing the amino acids delivered by tRNAs into a polypeptide chain. The nascent polypeptides leave the ribosome through a tunnel in the LSU and interact with protein factors that function in enzymatic processing, targeting, and the membrane insertion of nascent chains at the exit of the ribosomal tunnel. This Saccharomyces cerevisiae (strain ATCC 204508 / S288c) (Baker's yeast) protein is Small ribosomal subunit protein uS3.